A 96-amino-acid chain; its full sequence is Co-chaperonin GroES (96 aa).

It belongs to the GroES chaperonin family. In terms of assembly, heptamer of 7 subunits arranged in a ring. Interacts with the chaperonin GroEL.

It localises to the cytoplasm. Functionally, together with the chaperonin GroEL, plays an essential role in assisting protein folding. The GroEL-GroES system forms a nano-cage that allows encapsulation of the non-native substrate proteins and provides a physical environment optimized to promote and accelerate protein folding. GroES binds to the apical surface of the GroEL ring, thereby capping the opening of the GroEL channel. This chain is Co-chaperonin GroES, found in Shewanella sediminis (strain HAW-EB3).